A 412-amino-acid chain; its full sequence is Intraflagellar transport protein che-13 (412 aa).

Disordered regions lie at residues Met-1–Ile-21 and Pro-162–Asp-193. Residues Glu-165–Asp-193 show a composition bias toward acidic residues. Residues Gln-302 to Ile-393 are a coiled coil.

The protein belongs to the IFT57 family. As to quaternary structure, component of the IFT complex B composed of at least che-2, che-13, dyf-1, dyf-3, dyf-6, dyf-11, dyf-13, ift-20, ift-74, ift-81, ifta-2, osm-1, osm-5 and osm-6.

It is found in the cytoplasm. The protein resides in the cytoskeleton. It localises to the cilium axoneme. In terms of biological role, component of the intraflagellar transport (IFT) complex B required for transport of proteins in the motile cilium. May be required for ciliary entrance and transport of specific ciliary cargo proteins such as che-3 which are related to motility. Required for the formation of chemosensory cilia that detect chemosensory cues. The polypeptide is Intraflagellar transport protein che-13 (Caenorhabditis elegans).